Reading from the N-terminus, the 424-residue chain is Cysteate synthase (424 aa).

Residue lysine 106 is modified to N6-(pyridoxal phosphate)lysine. Pyridoxal 5'-phosphate-binding residues include asparagine 132 and threonine 381.

It belongs to the threonine synthase family. Cysteate synthase subfamily. As to quaternary structure, homotrimer. Requires pyridoxal 5'-phosphate as cofactor.

It carries out the reaction O-phospho-L-serine + sulfite + H(+) = L-cysteate + phosphate. Its pathway is cofactor biosynthesis; coenzyme M biosynthesis. Its function is as follows. Specifically catalyzes the beta-elimination of phosphate from L-phosphoserine and the beta-addition of sulfite to the dehydroalanine intermediate to produce L-cysteate. The polypeptide is Cysteate synthase (Methanoregula boonei (strain DSM 21154 / JCM 14090 / 6A8)).